Reading from the N-terminus, the 118-residue chain is Small ribosomal subunit protein uS13 (118 aa).

The interval 94 to 118 (GLPLRGQRTRTNARTRKGPRKAIRK) is disordered.

It belongs to the universal ribosomal protein uS13 family. As to quaternary structure, part of the 30S ribosomal subunit. Forms a loose heterodimer with protein S19. Forms two bridges to the 50S subunit in the 70S ribosome.

Functionally, located at the top of the head of the 30S subunit, it contacts several helices of the 16S rRNA. In the 70S ribosome it contacts the 23S rRNA (bridge B1a) and protein L5 of the 50S subunit (bridge B1b), connecting the 2 subunits; these bridges are implicated in subunit movement. Contacts the tRNAs in the A and P-sites. The polypeptide is Small ribosomal subunit protein uS13 (Xanthomonas axonopodis pv. citri (strain 306)).